A 170-amino-acid chain; its full sequence is MTDTRRAILAGGCFWGMQDLIRRQPGVVSTRVGYTGGTNDHPTYRNHPGHAEAVEIVYDPERTDYRALLEFFFQIHDPTTKDRQGNDIGTSYRSAIFYLDDEQRRVAEDTIADVDASGLWPGKVVTEVTPASEFWEAEPEHQDYLLRYPNGYTCHYPRPDWKLPKRQATA.

Cys13 is a catalytic residue.

Belongs to the MsrA Met sulfoxide reductase family.

It catalyses the reaction L-methionyl-[protein] + [thioredoxin]-disulfide + H2O = L-methionyl-(S)-S-oxide-[protein] + [thioredoxin]-dithiol. The enzyme catalyses [thioredoxin]-disulfide + L-methionine + H2O = L-methionine (S)-S-oxide + [thioredoxin]-dithiol. Its function is as follows. Has an important function as a repair enzyme for proteins that have been inactivated by oxidation. Catalyzes the reversible oxidation-reduction of methionine sulfoxide in proteins to methionine. In Nocardia farcinica (strain IFM 10152), this protein is Peptide methionine sulfoxide reductase MsrA.